The sequence spans 178 residues: Large ribosomal subunit protein uL6 (178 aa).

It belongs to the universal ribosomal protein uL6 family. As to quaternary structure, part of the 50S ribosomal subunit.

In terms of biological role, this protein binds to the 23S rRNA, and is important in its secondary structure. It is located near the subunit interface in the base of the L7/L12 stalk, and near the tRNA binding site of the peptidyltransferase center. The protein is Large ribosomal subunit protein uL6 of Streptococcus pneumoniae serotype 19F (strain G54).